The following is a 32-amino-acid chain: ilv operon leader peptide (32 aa).

The chain is ilv operon leader peptide (ilvL) from Escherichia coli O157:H7.